We begin with the raw amino-acid sequence, 87 residues long: Mitochondrial import inner membrane translocase subunit TIM8 (87 aa).

The Twin CX3C motif motif lies at 44–68 (CFKKCISRVDNGNLSSQEEECLASC). Disulfide bonds link C44–C68 and C48–C64.

The protein belongs to the small Tim family. In terms of assembly, heterohexamer; composed of 3 copies of TIM8 and 3 copies of TIM13, named soluble 70 kDa complex. Associates with the TIM22 complex, whose core is composed of TIM22 and TIM54. Interacts with the transmembrane regions of multi-pass transmembrane proteins in transit.

The protein localises to the mitochondrion inner membrane. Functionally, mitochondrial intermembrane chaperone that participates in the import and insertion of some multi-pass transmembrane proteins into the mitochondrial inner membrane. Also required for the transfer of beta-barrel precursors from the TOM complex to the sorting and assembly machinery (SAM complex) of the outer membrane. Acts as a chaperone-like protein that protects the hydrophobic precursors from aggregation and guide them through the mitochondrial intermembrane space. The TIM8-TIM13 complex is non essential and only mediates the import of few proteins, while the predominant TIM9-TIM10 70 kDa complex is crucial and mediates the import of much more proteins. This is Mitochondrial import inner membrane translocase subunit TIM8 (TIM8) from Candida glabrata (strain ATCC 2001 / BCRC 20586 / JCM 3761 / NBRC 0622 / NRRL Y-65 / CBS 138) (Yeast).